The chain runs to 170 residues: Co-chaperone protein HscB homolog (170 aa).

A J domain is found at 5–79; the sequence is DHFSLFGLPA…RARYLCEQAG (75 aa).

Belongs to the HscB family. As to quaternary structure, interacts with HscA and stimulates its ATPase activity.

In terms of biological role, co-chaperone involved in the maturation of iron-sulfur cluster-containing proteins. Seems to help targeting proteins to be folded toward HscA. This Bordetella petrii (strain ATCC BAA-461 / DSM 12804 / CCUG 43448) protein is Co-chaperone protein HscB homolog.